The sequence spans 511 residues: ATP synthase subunit alpha (511 aa).

169-176 is an ATP binding site; sequence GDRQTGKT.

The protein belongs to the ATPase alpha/beta chains family. As to quaternary structure, F-type ATPases have 2 components, CF(1) - the catalytic core - and CF(0) - the membrane proton channel. CF(1) has five subunits: alpha(3), beta(3), gamma(1), delta(1), epsilon(1). CF(0) has three main subunits: a(1), b(2) and c(9-12). The alpha and beta chains form an alternating ring which encloses part of the gamma chain. CF(1) is attached to CF(0) by a central stalk formed by the gamma and epsilon chains, while a peripheral stalk is formed by the delta and b chains.

The protein localises to the cell inner membrane. The catalysed reaction is ATP + H2O + 4 H(+)(in) = ADP + phosphate + 5 H(+)(out). Functionally, produces ATP from ADP in the presence of a proton gradient across the membrane. The alpha chain is a regulatory subunit. This chain is ATP synthase subunit alpha, found in Paracoccus denitrificans (strain Pd 1222).